We begin with the raw amino-acid sequence, 113 residues long: Tubulin alpha chain (113 aa).

Glutamate 52 is a GTP binding site. Glutamate 52 contacts Mg(2+).

It belongs to the tubulin family. As to quaternary structure, dimer of alpha and beta chains. A typical microtubule is a hollow water-filled tube with an outer diameter of 25 nm and an inner diameter of 15 nM. Alpha-beta heterodimers associate head-to-tail to form protofilaments running lengthwise along the microtubule wall with the beta-tubulin subunit facing the microtubule plus end conferring a structural polarity. Microtubules usually have 13 protofilaments but different protofilament numbers can be found in some organisms and specialized cells. It depends on Mg(2+) as a cofactor.

The protein localises to the cytoplasm. Its subcellular location is the cytoskeleton. It catalyses the reaction GTP + H2O = GDP + phosphate + H(+). Tubulin is the major constituent of microtubules, a cylinder consisting of laterally associated linear protofilaments composed of alpha- and beta-tubulin heterodimers. Microtubules grow by the addition of GTP-tubulin dimers to the microtubule end, where a stabilizing cap forms. Below the cap, tubulin dimers are in GDP-bound state, owing to GTPase activity of alpha-tubulin. The protein is Tubulin alpha chain (TUBA) of Picea abies (Norway spruce).